The following is a 282-amino-acid chain: 3-oxoadipate CoA-transferase subunit A (282 aa).

Belongs to the 3-oxoacid CoA-transferase subunit A family. As to quaternary structure, heterotetramer composed of 2 A and 2 B subunits.

The enzyme catalyses 3-oxoadipate + succinyl-CoA = 3-oxoadipyl-CoA + succinate. The protein operates within aromatic compound metabolism; beta-ketoadipate pathway; acetyl-CoA and succinyl-CoA from 3-oxoadipate: step 1/2. Its function is as follows. Catalyzes the CoA transfer from succinate to 3-oxoadipate (beta-ketoadipate). This is 3-oxoadipate CoA-transferase subunit A (catI) from Pseudomonas knackmussii (strain DSM 6978 / CCUG 54928 / LMG 23759 / B13).